Here is an 83-residue protein sequence, read N- to C-terminus: U5-theraphotoxin-Hs1c (83 aa).

An N-terminal signal peptide occupies residues 1–21 (MKTSMFLTLTGLVLLFVVCYA). Positions 22 to 49 (SESEEKEFPKELLSSIFAADSDFKVEER) are excised as a propeptide. Cystine bridges form between Cys-51-Cys-63, Cys-56-Cys-68, and Cys-62-Cys-75.

It belongs to the neurotoxin 10 (Hwtx-1) family. 51 (Hntx-8) subfamily. Hntx-8 sub-subfamily. Expressed by the venom gland.

The protein localises to the secreted. In terms of biological role, agglutinates erythrocytes. This is U5-theraphotoxin-Hs1c from Cyriopagopus schmidti (Chinese bird spider).